Reading from the N-terminus, the 279-residue chain is Ethanolamine utilization protein EutJ (279 aa).

Belongs to the EutJ family.

It functions in the pathway amine and polyamine degradation; ethanolamine degradation. Functionally, may protect ethanolamine ammonia-lyase (EAL, eutB-eutC) from inhibition, may function in assembling the bacterial microcompartment and/or in refolding EAL, suggesting it may have chaperone activity. Overexpression of eutJ and eutS in E.coli leads to multiple BMC-like structures; eutS expression alone leads to 1 BMC-like structure per cell. Expression of the eut operon allows this bacteria to use ethanolamine (EA) as a carbon, nitrogen and energy source. It relies on cobalamin (vitamin B12) both as a cofactor for the ethanolamine ammonia-lyase (EAL) activity and to induce the operon. EA enhances bacterial survival in macrophages in a concentration-dependent manner, suggesting it is an important nutrient during infection. The chain is Ethanolamine utilization protein EutJ from Salmonella typhimurium (strain LT2 / SGSC1412 / ATCC 700720).